The primary structure comprises 327 residues: Tetraacyldisaccharide 4'-kinase (327 aa).

56 to 63 contributes to the ATP binding site; it reads FVGGTGKT.

The protein belongs to the LpxK family.

The enzyme catalyses a lipid A disaccharide + ATP = a lipid IVA + ADP + H(+). The protein operates within glycolipid biosynthesis; lipid IV(A) biosynthesis; lipid IV(A) from (3R)-3-hydroxytetradecanoyl-[acyl-carrier-protein] and UDP-N-acetyl-alpha-D-glucosamine: step 6/6. Functionally, transfers the gamma-phosphate of ATP to the 4'-position of a tetraacyldisaccharide 1-phosphate intermediate (termed DS-1-P) to form tetraacyldisaccharide 1,4'-bis-phosphate (lipid IVA). In Halorhodospira halophila (strain DSM 244 / SL1) (Ectothiorhodospira halophila (strain DSM 244 / SL1)), this protein is Tetraacyldisaccharide 4'-kinase.